A 508-amino-acid chain; its full sequence is Maturase K (508 aa).

It belongs to the intron maturase 2 family. MatK subfamily.

Its subcellular location is the plastid. The protein localises to the chloroplast. In terms of biological role, usually encoded in the trnK tRNA gene intron. Probably assists in splicing its own and other chloroplast group II introns. The protein is Maturase K of Wolffia arrhiza (Rootless water-meal).